We begin with the raw amino-acid sequence, 511 residues long: Ribose import ATP-binding protein RbsA (511 aa).

2 ABC transporter domains span residues 9 to 245 (FEAK…VGRD) and 261 to 506 (LRAE…LPRR). An ATP-binding site is contributed by 41-48 (GENGAGKS).

This sequence belongs to the ABC transporter superfamily. Ribose importer (TC 3.A.1.2.1) family. In terms of assembly, the complex is composed of an ATP-binding protein (RbsA), two transmembrane proteins (RbsC) and a solute-binding protein (RbsB).

It is found in the cell inner membrane. It catalyses the reaction D-ribose(out) + ATP + H2O = D-ribose(in) + ADP + phosphate + H(+). Part of the ABC transporter complex RbsABC involved in ribose import. Responsible for energy coupling to the transport system. The chain is Ribose import ATP-binding protein RbsA from Rhodopirellula baltica (strain DSM 10527 / NCIMB 13988 / SH1).